The chain runs to 262 residues: Probable carboxylesterase SOBER1-like (262 aa).

Catalysis depends on charge relay system residues Ser-151, Asp-205, and His-237.

This sequence belongs to the AB hydrolase superfamily. AB hydrolase 2 family.

Its function is as follows. Carboxylesterase. This chain is Probable carboxylesterase SOBER1-like, found in Arabidopsis thaliana (Mouse-ear cress).